Consider the following 555-residue polypeptide: Formate--tetrahydrofolate ligase (555 aa).

T65–T72 serves as a coordination point for ATP.

It belongs to the formate--tetrahydrofolate ligase family.

The enzyme catalyses (6S)-5,6,7,8-tetrahydrofolate + formate + ATP = (6R)-10-formyltetrahydrofolate + ADP + phosphate. Its pathway is one-carbon metabolism; tetrahydrofolate interconversion. This is Formate--tetrahydrofolate ligase from Thermoanaerobacter sp. (strain X514).